Here is a 130-residue protein sequence, read N- to C-terminus: Phosphoribosyl-AMP cyclohydrolase (130 aa).

D74 contributes to the Mg(2+) binding site. C75 contributes to the Zn(2+) binding site. Mg(2+)-binding residues include D76 and D78. Positions 91 and 98 each coordinate Zn(2+).

It belongs to the PRA-CH family. As to quaternary structure, homodimer. Mg(2+) is required as a cofactor. Zn(2+) serves as cofactor.

The protein localises to the cytoplasm. The catalysed reaction is 1-(5-phospho-beta-D-ribosyl)-5'-AMP + H2O = 1-(5-phospho-beta-D-ribosyl)-5-[(5-phospho-beta-D-ribosylamino)methylideneamino]imidazole-4-carboxamide. It functions in the pathway amino-acid biosynthesis; L-histidine biosynthesis; L-histidine from 5-phospho-alpha-D-ribose 1-diphosphate: step 3/9. Functionally, catalyzes the hydrolysis of the adenine ring of phosphoribosyl-AMP. This is Phosphoribosyl-AMP cyclohydrolase from Bradyrhizobium sp. (strain ORS 278).